A 70-amino-acid polypeptide reads, in one-letter code: Large ribosomal subunit protein eL38 (70 aa).

Residue K4 forms a Glycyl lysine isopeptide (Lys-Gly) (interchain with G-Cter in SUMO2) linkage. K9 carries the N6-acetyllysine; alternate modification. A Glycyl lysine isopeptide (Lys-Gly) (interchain with G-Cter in SUMO2); alternate cross-link involves residue K9. K67 carries the N6-acetyllysine modification.

The protein belongs to the eukaryotic ribosomal protein eL38 family. In terms of assembly, component of the large ribosomal subunit.

It localises to the cytoplasm. Component of the large ribosomal subunit. The ribosome is a large ribonucleoprotein complex responsible for the synthesis of proteins in the cell. The polypeptide is Large ribosomal subunit protein eL38 (RPL38) (Homo sapiens (Human)).